We begin with the raw amino-acid sequence, 1221 residues long: MIDVNKFESMQIGLASPNKIRSWSYGEVKKPETINYRTLKPEKDGLFDERIFGPTKDYACACGKYKGVRYKGIVCDRCGVEVTTSHVRRERMGHIELAAPVTHIWYFKGIPSRMGLVLDVSPKQLEEVIYFAAYIVIDPGDTGLEAKQLLTEAEYREEKAKYGNRFVAKMGAEAIRDLLKQVDLDKEVTALKAELQTLKGQKRTRAIRRLDILDAFRNSGNKPEWMVMETVPVIPPDLRPMVQLEGGRFATSDLNDLYRRVINRNNRLKKLLDMHAPGLIVQNEERMLQEAVDALIDNGRRGRPVVGPGNRPLKSISHMLKGKQGRFRQNLLGKRVDYSGRSVIDVSPELKFYQCGVPRPMALELFRPFVMRELVRRGIASNIKNAKRKIDREDDDIWDVLEYVIKERPVLLNRAPTLHRLSIQAFEPVLVPGKALRLHPLACEAYNADFDGDQMAIHVPLSDEAVAESRLLMLAAHHILTPKDGTPIVTPSQDIVLGNYWLTQAEIGREGEGMIFATPEEATIAYNNGDIHYHTIIGVSAASMPKKDWGAGHEDSVFVTTYGRLVFNSLFPDDYFYINEPTQDNLKQPMADKYFLEDGQDIQDKIAEIGQDLVATPFKKGFLGDTISEIYKRYRVQRTSEYLDDLKEMGYSASTISGLTIGMADIPETKTKDALVAEARKQVKQVSKMFRRGKLSDKERHDNIIKIWTDCKDAVQQEIAEFKDQKNPISVMQQSGARGNISNFTQLAGMRGLMATPSGELFEIPVISNFKEGLTVLELFMSTHGARKGMTDTALKTAQSGYLTRRLVDVAQDVIIREDDCGTDRGITAKAIVDKDAGLIESLYDRLVGRFTNRTIRDPQTGEVICSKGVLMDEQMAQKIVDAGVQEVQIRSILTCNTSHGICRKCYGRNLATAEEVEIGEAVGTVAAQSIGEPGTQLTLRTFHTGGVAGAEDITQGLPRVQELFEARNPKGRAVISEVDGVVDKIESNAAEHLQEITVKGKIDTRVYTIPYTAKPAVQEGDEIHRGDKLIPGSIDPKELIKVTDTLTTEEYILAEVQKSYRTQGVDLADKHAEVLTRQMLQKVRVLDPGETDILPGEVMDIAEFRDRNRDVIISGGIPATAQAYILGITKAALETNSFLSAASFQETTRVLTDASIRGKNDPLLGLKENVIIGKIIPAGTGMPIYRDQVPKADVQQPDSVYSIADLEKKMEDENKETESK.

Zn(2+) contacts are provided by Cys60, Cys62, Cys75, and Cys78. Mg(2+) contacts are provided by Asp449, Asp451, and Asp453. Zn(2+) is bound by residues Cys821, Cys896, Cys903, and Cys906.

This sequence belongs to the RNA polymerase beta' chain family. As to quaternary structure, the RNAP catalytic core consists of 2 alpha, 1 beta, 1 beta' and 1 omega subunit. When a sigma factor is associated with the core the holoenzyme is formed, which can initiate transcription. Requires Mg(2+) as cofactor. Zn(2+) serves as cofactor.

It carries out the reaction RNA(n) + a ribonucleoside 5'-triphosphate = RNA(n+1) + diphosphate. Its function is as follows. DNA-dependent RNA polymerase catalyzes the transcription of DNA into RNA using the four ribonucleoside triphosphates as substrates. The protein is DNA-directed RNA polymerase subunit beta' of Lactobacillus delbrueckii subsp. bulgaricus (strain ATCC 11842 / DSM 20081 / BCRC 10696 / JCM 1002 / NBRC 13953 / NCIMB 11778 / NCTC 12712 / WDCM 00102 / Lb 14).